Reading from the N-terminus, the 142-residue chain is Ribosome-binding factor A (142 aa).

Residues Asp118–Lys142 are disordered.

The protein belongs to the RbfA family. In terms of assembly, monomer. Binds 30S ribosomal subunits, but not 50S ribosomal subunits or 70S ribosomes.

The protein resides in the cytoplasm. In terms of biological role, one of several proteins that assist in the late maturation steps of the functional core of the 30S ribosomal subunit. Associates with free 30S ribosomal subunits (but not with 30S subunits that are part of 70S ribosomes or polysomes). Required for efficient processing of 16S rRNA. May interact with the 5'-terminal helix region of 16S rRNA. In Shewanella piezotolerans (strain WP3 / JCM 13877), this protein is Ribosome-binding factor A.